The primary structure comprises 97 residues: Co-chaperonin GroES (97 aa).

The protein belongs to the GroES chaperonin family. In terms of assembly, heptamer of 7 subunits arranged in a ring. Interacts with the chaperonin GroEL.

The protein localises to the cytoplasm. Its function is as follows. Together with the chaperonin GroEL, plays an essential role in assisting protein folding. The GroEL-GroES system forms a nano-cage that allows encapsulation of the non-native substrate proteins and provides a physical environment optimized to promote and accelerate protein folding. GroES binds to the apical surface of the GroEL ring, thereby capping the opening of the GroEL channel. In Klebsiella pneumoniae subsp. pneumoniae (strain ATCC 700721 / MGH 78578), this protein is Co-chaperonin GroES.